Consider the following 100-residue polypeptide: Transcription and mRNA export factor SUS1 (100 aa).

This sequence belongs to the ENY2 family. As to quaternary structure, component of the nuclear pore complex (NPC)-associated TREX-2 complex (transcription and export complex 2), composed of at least SUS1, SAC3, THP1, SEM1, and CDC31. TREX-2 contains 2 SUS1 chains. The TREX-2 complex interacts with the nucleoporin NUP1. Component of the 1.8 MDa SAGA transcription coactivator-HAT complex. SAGA is built of 5 distinct domains with specialized functions. Within the SAGA complex, SUS1, SGF11, SGF73 and UBP8 form an additional subcomplex of SAGA called the DUB module (deubiquitination module). Interacts directly with THP1, SAC3, SGF11, and with the RNA polymerase II.

It localises to the nucleus. It is found in the nucleoplasm. The protein localises to the cytoplasm. Its subcellular location is the P-body. Functionally, involved in mRNA export coupled transcription activation by association with both the TREX-2 and the SAGA complexes. At the promoters, SAGA is required for recruitment of the basal transcription machinery. It influences RNA polymerase II transcriptional activity through different activities such as TBP interaction and promoter selectivity, interaction with transcription activators, and chromatin modification through histone acetylation and deubiquitination. Within the SAGA complex, participates in a subcomplex required for deubiquitination of H2B and for the maintenance of steady-state H3 methylation levels. The TREX-2 complex functions in docking export-competent ribonucleoprotein particles (mRNPs) to the nuclear entrance of the nuclear pore complex (nuclear basket). TREX-2 participates in mRNA export and accurate chromatin positioning in the nucleus by tethering genes to the nuclear periphery. May also be involved in cytoplasmic mRNA decay by interaction with components of P-bodies. This chain is Transcription and mRNA export factor SUS1, found in Candida glabrata (strain ATCC 2001 / BCRC 20586 / JCM 3761 / NBRC 0622 / NRRL Y-65 / CBS 138) (Yeast).